Here is a 586-residue protein sequence, read N- to C-terminus: Scavenger receptor cysteine-rich domain-containing group B protein (586 aa).

Residues 1-33 (MGPSERPSIGWTPKEAEMQIGPQPDGWSRGWKP) form a disordered region. The signal sequence occupies residues 1-58 (MGPSERPSIGWTPKEAEMQIGPQPDGWSRGWKPGDRGAVPLPLSPALSFLLLFPLASA). SRCR domains are found at residues 69-169 (LRLV…VLCD), 200-300 (VRLV…VLCA), 355-455 (LRLV…ALCA), and 484-584 (LRLA…VLCQ). Intrachain disulfides connect C94/C158, C107/C168, C138/C148, C225/C289, C238/C299, C269/C279, C380/C444, C393/C454, C424/C434, C509/C573, C522/C583, and C553/C563.

It is found in the secreted. In Mus musculus (Mouse), this protein is Scavenger receptor cysteine-rich domain-containing group B protein.